The sequence spans 1067 residues: Eukaryotic translation initiation factor 3 subunit A (1067 aa).

Residues 92-121 adopt a coiled-coil conformation; sequence LKKFIELAEKKVTEAQAKADEIQSSLESAA. A PCI domain is found at 339 to 523; it reads MTKAASFVLL…GVLTFDTDIF (185 aa). Positions 608–899 form a coiled coil; the sequence is RVLIEKKKEA…QKQREEEAEA (292 aa). Basic and acidic residues-rich tracts occupy residues 617 to 632, 642 to 665, 795 to 901, and 916 to 926; these read AATDALQRKQREEETR, EAEKQRLLDEQREREKKRLKDEQD, EVSE…EARR, and AEPERPAERTA. Disordered stretches follow at residues 617-665 and 795-1067; these read AATD…DEQD and EVSE…QQQQ. Low complexity-rich tracts occupy residues 965–976 and 1025–1046; these read AAPAAAPAPAAE and SSSSQPPSRTQTPPAPAAAASS.

The protein belongs to the eIF-3 subunit A family. Component of the eukaryotic translation initiation factor 3 (eIF-3) complex.

It localises to the cytoplasm. Functionally, RNA-binding component of the eukaryotic translation initiation factor 3 (eIF-3) complex, which is involved in protein synthesis of a specialized repertoire of mRNAs and, together with other initiation factors, stimulates binding of mRNA and methionyl-tRNAi to the 40S ribosome. The eIF-3 complex specifically targets and initiates translation of a subset of mRNAs involved in cell proliferation. The polypeptide is Eukaryotic translation initiation factor 3 subunit A (tif32) (Neosartorya fischeri (strain ATCC 1020 / DSM 3700 / CBS 544.65 / FGSC A1164 / JCM 1740 / NRRL 181 / WB 181) (Aspergillus fischerianus)).